The sequence spans 497 residues: Acetyl-coenzyme A carboxylase carboxyl transferase subunit beta (497 aa).

A CoA carboxyltransferase N-terminal domain is found at 217–489 (LWLQCDNCYG…NQNSNQYSQY (273 aa)). Zn(2+) contacts are provided by Cys-221, Cys-224, Cys-240, and Cys-243. The segment at 221–243 (CDNCYGLNYKKVLKSKMTICEQC) adopts a C4-type zinc-finger fold.

Belongs to the AccD/PCCB family. In terms of assembly, acetyl-CoA carboxylase is a heterohexamer composed of biotin carboxyl carrier protein, biotin carboxylase and 2 subunits each of ACCase subunit alpha and ACCase plastid-coded subunit beta (accD). The cofactor is Zn(2+).

It is found in the plastid. The catalysed reaction is N(6)-carboxybiotinyl-L-lysyl-[protein] + acetyl-CoA = N(6)-biotinyl-L-lysyl-[protein] + malonyl-CoA. It functions in the pathway lipid metabolism; malonyl-CoA biosynthesis; malonyl-CoA from acetyl-CoA: step 1/1. In terms of biological role, component of the acetyl coenzyme A carboxylase (ACC) complex. Biotin carboxylase (BC) catalyzes the carboxylation of biotin on its carrier protein (BCCP) and then the CO(2) group is transferred by the transcarboxylase to acetyl-CoA to form malonyl-CoA. This is Acetyl-coenzyme A carboxylase carboxyl transferase subunit beta from Cuscuta reflexa (Southern Asian dodder).